Consider the following 405-residue polypeptide: UDP-N-acetylglucosamine--N-acetylmuramyl-(pentapeptide) pyrophosphoryl-undecaprenol N-acetylglucosamine transferase (405 aa).

UDP-N-acetyl-alpha-D-glucosamine is bound by residues 11–13, N127, R168, S191, I248, and Q293; that span reads TGG.

The protein belongs to the glycosyltransferase 28 family. MurG subfamily.

The protein localises to the cell inner membrane. It catalyses the reaction di-trans,octa-cis-undecaprenyl diphospho-N-acetyl-alpha-D-muramoyl-L-alanyl-D-glutamyl-meso-2,6-diaminopimeloyl-D-alanyl-D-alanine + UDP-N-acetyl-alpha-D-glucosamine = di-trans,octa-cis-undecaprenyl diphospho-[N-acetyl-alpha-D-glucosaminyl-(1-&gt;4)]-N-acetyl-alpha-D-muramoyl-L-alanyl-D-glutamyl-meso-2,6-diaminopimeloyl-D-alanyl-D-alanine + UDP + H(+). It participates in cell wall biogenesis; peptidoglycan biosynthesis. Functionally, cell wall formation. Catalyzes the transfer of a GlcNAc subunit on undecaprenyl-pyrophosphoryl-MurNAc-pentapeptide (lipid intermediate I) to form undecaprenyl-pyrophosphoryl-MurNAc-(pentapeptide)GlcNAc (lipid intermediate II). In Sorangium cellulosum (strain So ce56) (Polyangium cellulosum (strain So ce56)), this protein is UDP-N-acetylglucosamine--N-acetylmuramyl-(pentapeptide) pyrophosphoryl-undecaprenol N-acetylglucosamine transferase.